Consider the following 331-residue polypeptide: Lipoyl synthase (331 aa).

Residues Met-1 to Ala-33 form a disordered region. Over residues Ala-7 to Gln-19 the composition is skewed to low complexity. A compositionally biased stretch (basic and acidic residues) spans Asp-21–Ala-33. [4Fe-4S] cluster is bound by residues Cys-78, Cys-83, Cys-89, Cys-104, Cys-108, Cys-111, and Ser-318. Residues Cys-89–Thr-307 form the Radical SAM core domain.

This sequence belongs to the radical SAM superfamily. Lipoyl synthase family. [4Fe-4S] cluster is required as a cofactor.

It localises to the cytoplasm. The enzyme catalyses [[Fe-S] cluster scaffold protein carrying a second [4Fe-4S](2+) cluster] + N(6)-octanoyl-L-lysyl-[protein] + 2 oxidized [2Fe-2S]-[ferredoxin] + 2 S-adenosyl-L-methionine + 4 H(+) = [[Fe-S] cluster scaffold protein] + N(6)-[(R)-dihydrolipoyl]-L-lysyl-[protein] + 4 Fe(3+) + 2 hydrogen sulfide + 2 5'-deoxyadenosine + 2 L-methionine + 2 reduced [2Fe-2S]-[ferredoxin]. It functions in the pathway protein modification; protein lipoylation via endogenous pathway; protein N(6)-(lipoyl)lysine from octanoyl-[acyl-carrier-protein]: step 2/2. In terms of biological role, catalyzes the radical-mediated insertion of two sulfur atoms into the C-6 and C-8 positions of the octanoyl moiety bound to the lipoyl domains of lipoate-dependent enzymes, thereby converting the octanoylated domains into lipoylated derivatives. This is Lipoyl synthase from Cupriavidus pinatubonensis (strain JMP 134 / LMG 1197) (Cupriavidus necator (strain JMP 134)).